The following is a 334-amino-acid chain: MTRSLFKGNFWSADILSTIGYDNIIQHLNNGRKNCKEFEDFLKERAAIEERYGKDLLNLSRKKPCGQSEINTLKRALEVFKQQVDNVAQCHIQLAQSLREEARKMEEFREKQKLQRKKTELIMDAIHKQKSLQFKKTMDAKKNYEQKCRDKDEAEQAVSRSANLVNPKQQEKLFVKLATSKTAVEDSDKAYMLHIGTLDKVREEWQSEHIKACEAFEAQECERINFFRNALWLHVNQLSQQCVTSDEMYEQVRKSLEMCSIQRDIEYFVNQRKTGQIPPAPIMYENFYSSQKNAVPAGKATGPNLARRGPLPIPKSSPDDPNYSLVDDYSLLYQ.

The F-BAR domain occupies 4 to 264 (SLFKGNFWSA…SLEMCSIQRD (261 aa)). Positions 66-166 (GQSEINTLKR…AVSRSANLVN (101 aa)) form a coiled coil. The tract at residues 295–322 (VPAGKATGPNLARRGPLPIPKSSPDDPN) is disordered. A phosphotyrosine mark is found at Tyr-323 and Tyr-329.

In terms of processing, phosphorylated on tyrosine.

The protein localises to the cytoplasm. It localises to the membrane. Functionally, binds to F-actin. May be involved in regulation of the actin cytoskeleton. The sequence is that of Proline-serine-threonine phosphatase-interacting protein 2 (PSTPIP2) from Homo sapiens (Human).